Reading from the N-terminus, the 290-residue chain is Putative phosphoenolpyruvate synthase regulatory protein (290 aa).

ADP is bound at residue 170–177 (GVSRCGKT).

The protein belongs to the pyruvate, phosphate/water dikinase regulatory protein family. PSRP subfamily.

It catalyses the reaction [pyruvate, water dikinase] + ADP = [pyruvate, water dikinase]-phosphate + AMP + H(+). The catalysed reaction is [pyruvate, water dikinase]-phosphate + phosphate + H(+) = [pyruvate, water dikinase] + diphosphate. Functionally, bifunctional serine/threonine kinase and phosphorylase involved in the regulation of the phosphoenolpyruvate synthase (PEPS) by catalyzing its phosphorylation/dephosphorylation. The sequence is that of Putative phosphoenolpyruvate synthase regulatory protein (ydiA) from Enterobacter agglomerans (Erwinia herbicola).